The chain runs to 369 residues: Maltose/maltodextrin import ATP-binding protein MalK (369 aa).

In terms of domain architecture, ABC transporter spans 4–234 (VTLRNVCKSY…PKNRFVAGFI (231 aa)). 36 to 43 (GPSGCGKS) is an ATP binding site.

It belongs to the ABC transporter superfamily. Maltooligosaccharide importer (TC 3.A.1.1.1) family. In terms of assembly, the complex is composed of two ATP-binding proteins (MalK), two transmembrane proteins (MalG and MalK) and a solute-binding protein (MalE).

Its subcellular location is the cell inner membrane. The catalysed reaction is D-maltose(out) + ATP + H2O = D-maltose(in) + ADP + phosphate + H(+). Its function is as follows. Part of the ABC transporter complex MalEFGK involved in maltose/maltodextrin import. Responsible for energy coupling to the transport system. This chain is Maltose/maltodextrin import ATP-binding protein MalK, found in Aliivibrio fischeri (strain ATCC 700601 / ES114) (Vibrio fischeri).